A 370-amino-acid chain; its full sequence is sn-glycerol-3-phosphate import ATP-binding protein UgpC (370 aa).

In terms of domain architecture, ABC transporter spans 4-236 (LSLKNIAKRY…PATAFVAAFM (233 aa)). 38-45 (GPSGCGKS) lines the ATP pocket.

It belongs to the ABC transporter superfamily. sn-glycerol-3-phosphate importer (TC 3.A.1.1.3) family. In terms of assembly, the complex is composed of two ATP-binding proteins (UgpC), two transmembrane proteins (UgpA and UgpE) and a solute-binding protein (UgpB).

The protein localises to the cell inner membrane. The catalysed reaction is sn-glycerol 3-phosphate(out) + ATP + H2O = sn-glycerol 3-phosphate(in) + ADP + phosphate + H(+). Part of the ABC transporter complex UgpBAEC involved in sn-glycerol-3-phosphate (G3P) import. Responsible for energy coupling to the transport system. The protein is sn-glycerol-3-phosphate import ATP-binding protein UgpC of Chromobacterium violaceum (strain ATCC 12472 / DSM 30191 / JCM 1249 / CCUG 213 / NBRC 12614 / NCIMB 9131 / NCTC 9757 / MK).